The primary structure comprises 254 residues: Ribonuclease HII (254 aa).

The 185-residue stretch at 70-254 (QAIAGIDEVG…TFEPVKSMLG (185 aa)) folds into the RNase H type-2 domain. Residues Asp76, Glu77, and Asp168 each coordinate a divalent metal cation.

It belongs to the RNase HII family. Requires Mn(2+) as cofactor. It depends on Mg(2+) as a cofactor.

The protein localises to the cytoplasm. It catalyses the reaction Endonucleolytic cleavage to 5'-phosphomonoester.. In terms of biological role, endonuclease that specifically degrades the RNA of RNA-DNA hybrids. This chain is Ribonuclease HII, found in Streptococcus gordonii (strain Challis / ATCC 35105 / BCRC 15272 / CH1 / DL1 / V288).